The sequence spans 381 residues: Alkanesulfonate monooxygenase (381 aa).

It belongs to the SsuD family. As to quaternary structure, homotetramer.

It carries out the reaction an alkanesulfonate + FMNH2 + O2 = an aldehyde + FMN + sulfite + H2O + 2 H(+). Catalyzes the desulfonation of aliphatic sulfonates. This chain is Alkanesulfonate monooxygenase, found in Escherichia coli O7:K1 (strain IAI39 / ExPEC).